The chain runs to 263 residues: UPF0328 protein ECU08_2060 (263 aa).

This sequence belongs to the UPF0328 family.

This chain is UPF0328 protein ECU08_2060, found in Encephalitozoon cuniculi (strain GB-M1) (Microsporidian parasite).